Here is a 305-residue protein sequence, read N- to C-terminus: Ornithine carbamoyltransferase (305 aa).

Residues 52-55 (STRT), glutamine 79, arginine 103, and 130-133 (HPCQ) each bind carbamoyl phosphate. L-ornithine is bound by residues asparagine 161, aspartate 221, and 225–226 (SM). Residues 261 to 262 (CL) and arginine 289 contribute to the carbamoyl phosphate site.

It belongs to the aspartate/ornithine carbamoyltransferase superfamily. OTCase family.

It localises to the cytoplasm. The catalysed reaction is carbamoyl phosphate + L-ornithine = L-citrulline + phosphate + H(+). Its pathway is amino-acid biosynthesis; L-arginine biosynthesis; L-arginine from L-ornithine and carbamoyl phosphate: step 1/3. Functionally, reversibly catalyzes the transfer of the carbamoyl group from carbamoyl phosphate (CP) to the N(epsilon) atom of ornithine (ORN) to produce L-citrulline. This is Ornithine carbamoyltransferase from Methanocorpusculum labreanum (strain ATCC 43576 / DSM 4855 / Z).